Here is a 42-residue protein sequence, read N- to C-terminus: Photosystem I reaction center subunit IX (42 aa).

Residues 7 to 27 form a helical membrane-spanning segment; the sequence is YLSTAPVLATLWFGFLAGLLI.

It belongs to the PsaJ family.

Its subcellular location is the plastid. It localises to the chloroplast thylakoid membrane. May help in the organization of the PsaE and PsaF subunits. The protein is Photosystem I reaction center subunit IX of Anthoceros angustus (Hornwort).